The primary structure comprises 95 residues: Small ribosomal subunit protein bS6 (95 aa).

It belongs to the bacterial ribosomal protein bS6 family.

Binds together with bS18 to 16S ribosomal RNA. The polypeptide is Small ribosomal subunit protein bS6 (Bacillus cytotoxicus (strain DSM 22905 / CIP 110041 / 391-98 / NVH 391-98)).